A 458-amino-acid polypeptide reads, in one-letter code: O-acyltransferase WSD (458 aa).

Histidine 133 acts as the Proton acceptor in catalysis.

The protein belongs to the long-chain O-acyltransferase family.

It carries out the reaction a long chain fatty alcohol + a fatty acyl-CoA = a wax ester + CoA. The catalysed reaction is an acyl-CoA + a 1,2-diacyl-sn-glycerol = a triacyl-sn-glycerol + CoA. It functions in the pathway glycerolipid metabolism; triacylglycerol biosynthesis. Its function is as follows. Bifunctional wax ester synthase/diacylglycerol acyltransferase (WS and DGAT). Catalyzes the terminal and only committed step in triacylglycerol synthesis by using diacylglycerol and fatty acyl CoA as substrates. Required for storage lipid synthesis. WS uses C(12)-CoA to C(18)-CoA substrates whereas DGAT prefers C(20)-CoA. Upon expression in E.coli and Pseudomonas citronellolis (DSM 50332) both WS and DGAT activities increase. This Acinetobacter baylyi (strain ATCC 33305 / BD413 / ADP1) protein is O-acyltransferase WSD (wax-dgaT).